The primary structure comprises 144 residues: Large ribosomal subunit protein uL13 (144 aa).

This sequence belongs to the universal ribosomal protein uL13 family. As to quaternary structure, part of the 50S ribosomal subunit.

Its function is as follows. This protein is one of the early assembly proteins of the 50S ribosomal subunit, although it is not seen to bind rRNA by itself. It is important during the early stages of 50S assembly. This Clostridium perfringens (strain ATCC 13124 / DSM 756 / JCM 1290 / NCIMB 6125 / NCTC 8237 / Type A) protein is Large ribosomal subunit protein uL13.